Reading from the N-terminus, the 310-residue chain is Putative S-adenosyl-L-methionine-dependent methyltransferase ML2640 (310 aa).

S-adenosyl-L-methionine is bound by residues aspartate 132 and 161–162 (DL).

It belongs to the UPF0677 family.

In terms of biological role, exhibits S-adenosyl-L-methionine-dependent methyltransferase activity. The polypeptide is Putative S-adenosyl-L-methionine-dependent methyltransferase ML2640 (Mycobacterium leprae (strain TN)).